Reading from the N-terminus, the 131-residue chain is Small ribosomal subunit protein uS11 (131 aa).

Belongs to the universal ribosomal protein uS11 family. In terms of assembly, part of the 30S ribosomal subunit.

Its function is as follows. Located on the platform of the 30S subunit. In Methanospirillum hungatei JF-1 (strain ATCC 27890 / DSM 864 / NBRC 100397 / JF-1), this protein is Small ribosomal subunit protein uS11.